A 391-amino-acid chain; its full sequence is MSQEPICQEPMSNVTVRSVPSDNSASNPLDKIVIESATLAARLARPELLELTPYQSARRLGGKGDIWINANESPFNNVAVGELDLTKLNRYPECQPPALINAYSQYSGVVESKIVASRGADEAIELLIRAFCIPGIDSIATFGPTYGMYAISAQTFNVGVKALSLSAEYGLPADFATAARGAKLVFICNPNNPTGTVIDKARIEQAIQALPDSIVVVDEAYIEFCPEYSVADLLETYPNLVVLRTLSKAFALAGARCGFLLANEEIIEIIMRVIAPYPVPLPVSEVAEQALSPAGIARMKTQVKELNTQGERLAAALNLYCEQWGGAVLKPNGNYVLAEFDDVAKVAKLLTDNGIVARAYKDPRLAKAIRFSFSSQVDTDRLVSLFESQKR.

Lys248 carries the post-translational modification N6-(pyridoxal phosphate)lysine.

It belongs to the class-II pyridoxal-phosphate-dependent aminotransferase family. Histidinol-phosphate aminotransferase subfamily. As to quaternary structure, homodimer. It depends on pyridoxal 5'-phosphate as a cofactor.

It carries out the reaction L-histidinol phosphate + 2-oxoglutarate = 3-(imidazol-4-yl)-2-oxopropyl phosphate + L-glutamate. It participates in amino-acid biosynthesis; L-histidine biosynthesis; L-histidine from 5-phospho-alpha-D-ribose 1-diphosphate: step 7/9. This chain is Histidinol-phosphate aminotransferase, found in Shewanella oneidensis (strain ATCC 700550 / JCM 31522 / CIP 106686 / LMG 19005 / NCIMB 14063 / MR-1).